The sequence spans 2515 residues: Nonribosomal peptide synthetase tpzA (2515 aa).

The interval 246–648 is adenylation 1; that stretch reads ELATRQPGAQ…GRMGTQVKLR (403 aa). The region spanning 794 to 867 is the Carrier 1 domain; the sequence is SEVEHLIHAI…DMATVALKTS (74 aa). O-(pantetheine 4'-phosphoryl)serine is present on S828. The tract at residues 924 to 1332 is condensation 1; that stretch reads DAYPCSPLQE…IRSVPHITPE (409 aa). Residues 1357-1758 are adenylation 2; sequence RKQSQETPSA…GRMNDQIKLR (402 aa). The Carrier 2 domain occupies 1900–1976; sequence LATTNEERTL…AILSHLTGRK (77 aa). The residue at position 1937 (S1937) is an O-(pantetheine 4'-phosphoryl)serine. Residues 2013-2431 form a condensation 2 region; that stretch reads VEDIYPCGPI…LGILPPEEQK (419 aa). One can recognise a Carrier 3 domain in the interval 2436-2512; that stretch reads PSLSAAVVRL…AMARRSLVVS (77 aa). At S2473 the chain carries O-(pantetheine 4'-phosphoryl)serine.

This sequence belongs to the NRP synthetase family.

It functions in the pathway secondary metabolite biosynthesis. In terms of biological role, nonribosomal peptide synthetase; part of the gene cluster that mediates the biosynthesis of terreazepine,. The first step of terreazepine biosynthesis is catalyzed by the indoleamine 2,3-dioxygenase tpzB which produces N-formyl-kynurenine through the catabolism of tryptophan. The two-module NRPS tpzA then utilizes anthranilate and kynurenine to assemble terreazepine. The first adenylation domain of tpzA (A1) loads anthranilate onto the T1 domain, while A2 loads kynurenine, generated through spontaneous nonenzymatic deformylation of the tzpB-supplied N-formyl-kynurenine. TpzA produces a 2:1 mixture of S-R enantiomers, which suggests that the A2 domain accepts both D- and L-kynurenine. The peptide bond formation between the tethered amino acids is catalyzed by the first condensation domain (C1) between anthranilate's carbonyl carbon and kynurenine's aliphatic primary amine. The second C domain (C2) catalyzes the final cyclization event between the aromatic amine of kynurenine and the tethered carbonyl carbon, yielding the final terreazepine product. The T3 domain may facilitate the interaction with downstream tailoring enzymes. This Aspergillus terreus (strain NIH 2624 / FGSC A1156) protein is Nonribosomal peptide synthetase tpzA.